Consider the following 340-residue polypeptide: Phenylalanine--tRNA ligase alpha subunit (340 aa).

Mg(2+) is bound at residue glutamate 258.

It belongs to the class-II aminoacyl-tRNA synthetase family. Phe-tRNA synthetase alpha subunit type 1 subfamily. Tetramer of two alpha and two beta subunits. It depends on Mg(2+) as a cofactor.

It localises to the cytoplasm. The catalysed reaction is tRNA(Phe) + L-phenylalanine + ATP = L-phenylalanyl-tRNA(Phe) + AMP + diphosphate + H(+). In Corynebacterium efficiens (strain DSM 44549 / YS-314 / AJ 12310 / JCM 11189 / NBRC 100395), this protein is Phenylalanine--tRNA ligase alpha subunit.